A 25-amino-acid polypeptide reads, in one-letter code: Css54 (25 aa).

As to expression, expressed by the venom gland.

It is found in the secreted. It localises to the target cell membrane. In terms of biological role, amphipathic peptide that shows antibacterial activity against E.coli (MIC=12.5 ug/ml) and S.aureus (MIC=12.5 ug/ml). Has hemolytic activity against human erythrocytes (25 uM provokes 83% of hemolysis). May act by disrupting the integrity of the bacterial cell membrane. Increases efficacy of antibiotics (ethambutol, pyrazinamide, isoniazid, rifampicin) when tested against S.aureus, probably by facilitating their incorporation into the bacteria. In Centruroides suffusus (Durango bark scorpion), this protein is Css54.